The following is a 238-amino-acid chain: Ribonuclease PH (238 aa).

Phosphate is bound by residues R86 and 124 to 126 (GTR).

This sequence belongs to the RNase PH family. In terms of assembly, homohexameric ring arranged as a trimer of dimers.

It carries out the reaction tRNA(n+1) + phosphate = tRNA(n) + a ribonucleoside 5'-diphosphate. Functionally, phosphorolytic 3'-5' exoribonuclease that plays an important role in tRNA 3'-end maturation. Removes nucleotide residues following the 3'-CCA terminus of tRNAs; can also add nucleotides to the ends of RNA molecules by using nucleoside diphosphates as substrates, but this may not be physiologically important. Probably plays a role in initiation of 16S rRNA degradation (leading to ribosome degradation) during starvation. The sequence is that of Ribonuclease PH from Aliivibrio salmonicida (strain LFI1238) (Vibrio salmonicida (strain LFI1238)).